A 115-amino-acid polypeptide reads, in one-letter code: Holo-[acyl-carrier-protein] synthase (115 aa).

Residues D8 and E50 each contribute to the Mg(2+) site.

Belongs to the P-Pant transferase superfamily. AcpS family. Requires Mg(2+) as cofactor.

It is found in the cytoplasm. The catalysed reaction is apo-[ACP] + CoA = holo-[ACP] + adenosine 3',5'-bisphosphate + H(+). In terms of biological role, transfers the 4'-phosphopantetheine moiety from coenzyme A to a Ser of acyl-carrier-protein. In Renibacterium salmoninarum (strain ATCC 33209 / DSM 20767 / JCM 11484 / NBRC 15589 / NCIMB 2235), this protein is Holo-[acyl-carrier-protein] synthase.